Consider the following 74-residue polypeptide: uncharacterized protein (74 aa).

This is an uncharacterized protein from Acidianus hospitalis (AFV-1).